The sequence spans 196 residues: 7-methyl-GTP pyrophosphatase (196 aa).

Asp-72 functions as the Proton acceptor in the catalytic mechanism.

It belongs to the Maf family. YceF subfamily. A divalent metal cation is required as a cofactor.

The protein resides in the cytoplasm. The enzyme catalyses N(7)-methyl-GTP + H2O = N(7)-methyl-GMP + diphosphate + H(+). Nucleoside triphosphate pyrophosphatase that hydrolyzes 7-methyl-GTP (m(7)GTP). May have a dual role in cell division arrest and in preventing the incorporation of modified nucleotides into cellular nucleic acids. This is 7-methyl-GTP pyrophosphatase from Neisseria meningitidis serogroup A / serotype 4A (strain DSM 15465 / Z2491).